Reading from the N-terminus, the 258-residue chain is Electron transfer flavoprotein beta subunit lysine methyltransferase (258 aa).

This sequence belongs to the methyltransferase superfamily. ETFBKMT family.

It is found in the cytoplasm. The protein localises to the mitochondrion matrix. The enzyme catalyses L-lysyl-[protein] + 3 S-adenosyl-L-methionine = N(6),N(6),N(6)-trimethyl-L-lysyl-[protein] + 3 S-adenosyl-L-homocysteine + 3 H(+). In terms of biological role, protein-lysine methyltransferase that selectively trimethylates the flavoprotein ETFB in mitochondria. Thereby, may negatively regulate the function of ETFB in electron transfer from Acyl-CoA dehydrogenases to the main respiratory chain. The protein is Electron transfer flavoprotein beta subunit lysine methyltransferase of Danio rerio (Zebrafish).